Reading from the N-terminus, the 177-residue chain is UPF0114 protein HPP12_0190 (177 aa).

4 helical membrane passes run 15–35 (WLLA…GYAF), 54–74 (LVLS…VLMV), 102–122 (FNAL…IFLL), and 145–165 (PIFW…LAAV).

The protein belongs to the UPF0114 family.

It is found in the cell membrane. In Helicobacter pylori (strain P12), this protein is UPF0114 protein HPP12_0190.